The primary structure comprises 312 residues: DNA-directed RNA polymerase subunit alpha (312 aa).

Positions 1–225 are alpha N-terminal domain (alpha-NTD); it reads MIEFEKPNIT…VEHFKVFESA (225 aa). The segment at 243 to 312 is alpha C-terminal domain (alpha-CTD); the sequence is KEKKLEMTIE…DLGLSLRQED (70 aa).

This sequence belongs to the RNA polymerase alpha chain family. In terms of assembly, homodimer. The RNAP catalytic core consists of 2 alpha, 1 beta, 1 beta' and 1 omega subunit. When a sigma factor is associated with the core the holoenzyme is formed, which can initiate transcription.

It catalyses the reaction RNA(n) + a ribonucleoside 5'-triphosphate = RNA(n+1) + diphosphate. DNA-dependent RNA polymerase catalyzes the transcription of DNA into RNA using the four ribonucleoside triphosphates as substrates. The sequence is that of DNA-directed RNA polymerase subunit alpha from Lactobacillus helveticus (strain DPC 4571).